Here is a 246-residue protein sequence, read N- to C-terminus: Probable transcriptional regulatory protein WD_0484 (246 aa).

A disordered region spans residues 1–22; the sequence is MAGHSQFSNIKHRKGAQDAKRS.

The protein belongs to the TACO1 family.

Its subcellular location is the cytoplasm. The sequence is that of Probable transcriptional regulatory protein WD_0484 from Wolbachia pipientis wMel.